The chain runs to 303 residues: Probable cell division protein WhiA (303 aa).

The segment at residues 272–303 is a DNA-binding region (H-T-H motif); the sequence is SIQQLADSLSTPLTKSGVNHRLRKINKIADEL.

This sequence belongs to the WhiA family.

Involved in cell division and chromosome segregation. The polypeptide is Probable cell division protein WhiA (Streptococcus pneumoniae serotype 2 (strain D39 / NCTC 7466)).